The chain runs to 22 residues: Odorant-binding protein 1 (22 aa).

This sequence belongs to the calycin superfamily. Lipocalin family. In terms of assembly, homodimer. The N-terminus is blocked.

In terms of biological role, binds the chemical odorant, 2-isobutyl-3-methoxypyrazine. The protein is Odorant-binding protein 1 of Oryctolagus cuniculus (Rabbit).